Reading from the N-terminus, the 599-residue chain is Elongation factor 4 (599 aa).

The 183-residue stretch at 5 to 187 folds into the tr-type G domain; the sequence is SHIRNFSIIA…RLVTAIPAPE (183 aa). Residues 17–22 and 134–137 contribute to the GTP site; these read DHGKST and NKMD.

Belongs to the TRAFAC class translation factor GTPase superfamily. Classic translation factor GTPase family. LepA subfamily.

The protein localises to the cell inner membrane. The catalysed reaction is GTP + H2O = GDP + phosphate + H(+). Functionally, required for accurate and efficient protein synthesis under certain stress conditions. May act as a fidelity factor of the translation reaction, by catalyzing a one-codon backward translocation of tRNAs on improperly translocated ribosomes. Back-translocation proceeds from a post-translocation (POST) complex to a pre-translocation (PRE) complex, thus giving elongation factor G a second chance to translocate the tRNAs correctly. Binds to ribosomes in a GTP-dependent manner. The protein is Elongation factor 4 of Pseudomonas aeruginosa (strain LESB58).